We begin with the raw amino-acid sequence, 263 residues long: Histidine racemase (263 aa).

C67 functions as the Proton acceptor in the catalytic mechanism. C209 acts as the Proton donor in catalysis.

The protein belongs to the histidine racemase family. Homodimer.

The enzyme catalyses L-histidine = D-histidine. Its function is as follows. Cofactor-independent isomerase that catalyzes the reversible conversion of L-histidine to D-histidine. May play a role in growth of F.nucleatum. The protein is Histidine racemase of Fusobacterium nucleatum subsp. nucleatum (strain ATCC 23726 / VPI 4351).